Consider the following 83-residue polypeptide: Large ribosomal subunit protein bL27c (83 aa).

The disordered stretch occupies residues methionine 1–lysine 24.

Belongs to the bacterial ribosomal protein bL27 family.

It localises to the plastid. The protein resides in the chloroplast. The polypeptide is Large ribosomal subunit protein bL27c (rpl27) (Trieres chinensis (Marine centric diatom)).